The primary structure comprises 79 residues: Delta-hormotoxin-Cpt1b (79 aa).

The signal sequence occupies residues 1–20 (MKTQVLALFVLCVLFCLAES). The propeptide occupies 21-31 (RTTLNKRNDIE). Cystine bridges form between C36/C75, C38/C66, and C56/C76.

Belongs to the sea anemone sodium channel inhibitory toxin family.

Its subcellular location is the secreted. The protein resides in the nematocyst. Its function is as follows. In neuromuscular preparation of crustaceans, the toxin increased neurotransmitter release, causing repetitive firing of the axons. May affect sodium channels (Nav). This chain is Delta-hormotoxin-Cpt1b, found in Calliactis parasitica (Sea anemone).